The following is a 213-amino-acid chain: 3,4-dihydroxy-2-butanone 4-phosphate synthase (213 aa).

Residues arginine 27–glutamate 28, aspartate 32, arginine 140–threonine 144, and glutamate 164 each bind D-ribulose 5-phosphate. Glutamate 28 contributes to the Mg(2+) binding site. Histidine 143 contacts Mg(2+).

Belongs to the DHBP synthase family. As to quaternary structure, homodimer. Requires Mg(2+) as cofactor. It depends on Mn(2+) as a cofactor.

It catalyses the reaction D-ribulose 5-phosphate = (2S)-2-hydroxy-3-oxobutyl phosphate + formate + H(+). The protein operates within cofactor biosynthesis; riboflavin biosynthesis; 2-hydroxy-3-oxobutyl phosphate from D-ribulose 5-phosphate: step 1/1. Its function is as follows. Catalyzes the conversion of D-ribulose 5-phosphate to formate and 3,4-dihydroxy-2-butanone 4-phosphate. The chain is 3,4-dihydroxy-2-butanone 4-phosphate synthase from Agrobacterium fabrum (strain C58 / ATCC 33970) (Agrobacterium tumefaciens (strain C58)).